The sequence spans 188 residues: GTP cyclohydrolase 1 (188 aa).

Zn(2+) is bound by residues cysteine 75, histidine 78, and cysteine 146.

The protein belongs to the GTP cyclohydrolase I family. As to quaternary structure, toroid-shaped homodecamer, composed of two pentamers of five dimers.

It catalyses the reaction GTP + H2O = 7,8-dihydroneopterin 3'-triphosphate + formate + H(+). Its pathway is cofactor biosynthesis; 7,8-dihydroneopterin triphosphate biosynthesis; 7,8-dihydroneopterin triphosphate from GTP: step 1/1. This is GTP cyclohydrolase 1 from Hahella chejuensis (strain KCTC 2396).